A 237-amino-acid chain; its full sequence is Probable transcriptional regulatory protein Mfl546 (237 aa).

The tract at residues 1-20 (MGRAHEVRAASMAKTAAKKS) is disordered. A compositionally biased stretch (low complexity) spans 9–20 (AASMAKTAAKKS).

This sequence belongs to the TACO1 family.

It is found in the cytoplasm. This Mesoplasma florum (strain ATCC 33453 / NBRC 100688 / NCTC 11704 / L1) (Acholeplasma florum) protein is Probable transcriptional regulatory protein Mfl546.